Reading from the N-terminus, the 264-residue chain is S-adenosylmethionine decarboxylase proenzyme (264 aa).

Catalysis depends on serine 112, which acts as the Schiff-base intermediate with substrate; via pyruvic acid. The residue at position 112 (serine 112) is a Pyruvic acid (Ser); by autocatalysis. The active-site Proton acceptor; for processing activity is the histidine 117. The Proton donor; for catalytic activity role is filled by cysteine 140.

This sequence belongs to the prokaryotic AdoMetDC family. Type 2 subfamily. In terms of assembly, heterooctamer of four alpha and four beta chains arranged as a tetramer of alpha/beta heterodimers. Pyruvate serves as cofactor. In terms of processing, is synthesized initially as an inactive proenzyme. Formation of the active enzyme involves a self-maturation process in which the active site pyruvoyl group is generated from an internal serine residue via an autocatalytic post-translational modification. Two non-identical subunits are generated from the proenzyme in this reaction, and the pyruvate is formed at the N-terminus of the alpha chain, which is derived from the carboxyl end of the proenzyme. The post-translation cleavage follows an unusual pathway, termed non-hydrolytic serinolysis, in which the side chain hydroxyl group of the serine supplies its oxygen atom to form the C-terminus of the beta chain, while the remainder of the serine residue undergoes an oxidative deamination to produce ammonia and the pyruvoyl group blocking the N-terminus of the alpha chain.

It carries out the reaction S-adenosyl-L-methionine + H(+) = S-adenosyl 3-(methylsulfanyl)propylamine + CO2. The protein operates within amine and polyamine biosynthesis; S-adenosylmethioninamine biosynthesis; S-adenosylmethioninamine from S-adenosyl-L-methionine: step 1/1. Catalyzes the decarboxylation of S-adenosylmethionine to S-adenosylmethioninamine (dcAdoMet), the propylamine donor required for the synthesis of the polyamines spermine and spermidine from the diamine putrescine. In Sodalis glossinidius (strain morsitans), this protein is S-adenosylmethionine decarboxylase proenzyme.